Reading from the N-terminus, the 304-residue chain is Acetylglutamate kinase (304 aa).

Substrate-binding positions include 64 to 65, Arg86, and Asn181; that span reads GG.

Belongs to the acetylglutamate kinase family. ArgB subfamily.

The protein resides in the plastid. It is found in the chloroplast. The catalysed reaction is N-acetyl-L-glutamate + ATP = N-acetyl-L-glutamyl 5-phosphate + ADP. It functions in the pathway amino-acid biosynthesis; L-arginine biosynthesis; N(2)-acetyl-L-ornithine from L-glutamate: step 2/4. Functionally, catalyzes the ATP-dependent phosphorylation of N-acetyl-L-glutamate. The sequence is that of Acetylglutamate kinase from Cyanidium caldarium (Red alga).